We begin with the raw amino-acid sequence, 374 residues long: DNA/RNA-binding protein ALBA4 (374 aa).

The protein belongs to the histone-like Alba family.

It is found in the cytoplasm. The protein resides in the cell cortex. The protein localises to the perinuclear region. Its function is as follows. Possesses DNA- and RNA-binding activities. Binds to DNA with relaxed sequence specificity. May associate with the subtelomeric TARE6 repeats. Regulates the abundance of transcript sub-populations in a stage-specific manner. Regulates activation of male gametocytes. Participates in the coordination of sporozoite development in the oocyst. This is DNA/RNA-binding protein ALBA4 from Plasmodium yoelii yoelii.